A 176-amino-acid chain; its full sequence is Ribosome rescue factor SmrB (176 aa).

One can recognise a Smr domain in the interval 98 to 173 (LDVHGLNQDQ…RSTAILFLIH (76 aa)).

This sequence belongs to the SmrB family. In terms of assembly, associates with collided ribosomes, but not with correctly translating polysomes.

Acts as a ribosome collision sensor. Detects stalled/collided disomes (pairs of ribosomes where the leading ribosome is stalled and a second ribosome has collided with it) and endonucleolytically cleaves mRNA at the 5' boundary of the stalled ribosome. Stalled/collided disomes form a new interface (primarily via the 30S subunits) that binds SmrB. Cleaved mRNA becomes available for tmRNA ligation, leading to ribosomal subunit dissociation and rescue of stalled ribosomes. The chain is Ribosome rescue factor SmrB from Buchnera aphidicola subsp. Baizongia pistaciae (strain Bp).